Reading from the N-terminus, the 267-residue chain is D-aminoacyl-tRNA deacylase (267 aa).

Belongs to the DtdA deacylase family. As to quaternary structure, monomer. The cofactor is Zn(2+).

The enzyme catalyses a D-aminoacyl-tRNA + H2O = a tRNA + a D-alpha-amino acid + H(+). The catalysed reaction is glycyl-tRNA(Ala) + H2O = tRNA(Ala) + glycine + H(+). Functionally, D-aminoacyl-tRNA deacylase with broad substrate specificity. By recycling D-aminoacyl-tRNA to D-amino acids and free tRNA molecules, this enzyme counteracts the toxicity associated with the formation of D-aminoacyl-tRNA entities in vivo. This Methanothrix thermoacetophila (strain DSM 6194 / JCM 14653 / NBRC 101360 / PT) (Methanosaeta thermophila) protein is D-aminoacyl-tRNA deacylase.